Consider the following 367-residue polypeptide: Chorismate synthase (367 aa).

Residue Arg-48 participates in NADP(+) binding. Residues 125–127 (RSS), 243–244 (NA), Gly-283, 298–302 (KPTSS), and Arg-324 each bind FMN.

The protein belongs to the chorismate synthase family. In terms of assembly, homotetramer. The cofactor is FMNH2.

It catalyses the reaction 5-O-(1-carboxyvinyl)-3-phosphoshikimate = chorismate + phosphate. The protein operates within metabolic intermediate biosynthesis; chorismate biosynthesis; chorismate from D-erythrose 4-phosphate and phosphoenolpyruvate: step 7/7. Functionally, catalyzes the anti-1,4-elimination of the C-3 phosphate and the C-6 proR hydrogen from 5-enolpyruvylshikimate-3-phosphate (EPSP) to yield chorismate, which is the branch point compound that serves as the starting substrate for the three terminal pathways of aromatic amino acid biosynthesis. This reaction introduces a second double bond into the aromatic ring system. In Psychrobacter sp. (strain PRwf-1), this protein is Chorismate synthase.